A 622-amino-acid polypeptide reads, in one-letter code: Probable potassium transport system protein Kup (622 aa).

12 consecutive transmembrane segments (helical) span residues 8–28 (LAVL…TSVL), 50–70 (ILSI…VSLV), 101–121 (VLLL…VITP), 137–157 (PTFT…LFAM), 165–185 (IGKF…LLGV), 213–233 (ITFI…ALYA), 247–267 (WFSV…ALLL), 285–305 (ALIP…QALI), 337–357 (IYMP…VVMF), 366–386 (AYGI…FYVI), 393–413 (PLAL…AFFA), and 419–439 (LFAG…LMIT).

The protein belongs to the HAK/KUP transporter (TC 2.A.72) family.

It is found in the cell inner membrane. It carries out the reaction K(+)(in) + H(+)(in) = K(+)(out) + H(+)(out). In terms of biological role, transport of potassium into the cell. Likely operates as a K(+):H(+) symporter. The sequence is that of Probable potassium transport system protein Kup from Polaromonas naphthalenivorans (strain CJ2).